We begin with the raw amino-acid sequence, 246 residues long: Ribonuclease PH (246 aa).

Phosphate is bound by residues Arg91 and 129 to 131 (GTR).

The protein belongs to the RNase PH family. In terms of assembly, homohexameric ring arranged as a trimer of dimers.

The enzyme catalyses tRNA(n+1) + phosphate = tRNA(n) + a ribonucleoside 5'-diphosphate. Its function is as follows. Phosphorolytic 3'-5' exoribonuclease that plays an important role in tRNA 3'-end maturation. Removes nucleotide residues following the 3'-CCA terminus of tRNAs; can also add nucleotides to the ends of RNA molecules by using nucleoside diphosphates as substrates, but this may not be physiologically important. Probably plays a role in initiation of 16S rRNA degradation (leading to ribosome degradation) during starvation. The protein is Ribonuclease PH of Burkholderia vietnamiensis (strain G4 / LMG 22486) (Burkholderia cepacia (strain R1808)).